Here is a 774-residue protein sequence, read N- to C-terminus: MKNKLRQIKENREKYRKLKEEELREKTKQLKERAKQESLEELMVEAYSNVWEGAARVLKLEAYDVQLIGAMVLNKGQIAEMKTGEGKSLVAAFASYLNALSGKGVHIVTVNDYLAKRDERWIGEVLRYLGLKTAVITNESSREERKKGYEADVTYITNSELGFDYLRDHMAWSKEEIVQREFNYCIIDEVDSILIDEARTPLIISGPTKGSEKPYKVAWEIGKRMKEGEDYELEEKSKQVILKEKGIKRCEEALEVKDIFSMETPWAHYVMNAIKAKHFYIKDVNYIIKEGEVVIVDEFTGRIMGGRRWADGLHQAIEAKEGVKIQEESETLASITYQNLFLLYPKLAGMTGTAKTEEEEFEQIYGLKVVSIPTHRKMKRKDYPDVVYRTSRSKWMAVAEECERMWTKGRPVLVGTTSIEKSELLARLLEEKGVKYKLLNARPSLAADEASIIAQAGKIGSITIATNMAGRGTDIILGGNIKEAFGEWIKERKKQVDIEEEWRKVLEGKADEESEKKYKQLKEEHEKEQKRVKQLGGLYVIGTERHESRRIDNQLRGRSGRQGDEGSSRFFISLEDDLLRIFGGGQMGEIMSRLGVEEPLESAFLSKSLDRAQKKVENYYYQMRKQLFEYDQVLNSQRKAIYKERTDILRSEEVGEWSKSYIRKEWPGGLLGIKRGMRNRSEVEISYDVKKMQMESVQAGLMNELERLLLLQQIDKSWSKHLKEMSLLREFIAWRGYAQRDPLVEYKNESYNLFIKMIEEIRQGYAYSLFRSQA.

Residues Gln-66, 84-88, and Asp-474 contribute to the ATP site; that span reads GEGKS.

It belongs to the SecA family.

The protein localises to the plastid. It localises to the chloroplast stroma. Its subcellular location is the chloroplast thylakoid membrane. It carries out the reaction ATP + H2O + cellular proteinSide 1 = ADP + phosphate + cellular proteinSide 2.. In terms of biological role, has a central role in coupling the hydrolysis of ATP to the transfer of proteins across the thylakoid membrane. This Cyanidioschyzon merolae (strain NIES-3377 / 10D) (Unicellular red alga) protein is Protein translocase subunit SecA.